The primary structure comprises 182 residues: Large ribosomal subunit protein bL25 (182 aa).

The protein belongs to the bacterial ribosomal protein bL25 family. CTC subfamily. In terms of assembly, part of the 50S ribosomal subunit; part of the 5S rRNA/L5/L18/L25 subcomplex. Contacts the 5S rRNA. Binds to the 5S rRNA independently of L5 and L18.

Its function is as follows. This is one of the proteins that binds to the 5S RNA in the ribosome where it forms part of the central protuberance. In Borreliella burgdorferi (strain ZS7) (Borrelia burgdorferi), this protein is Large ribosomal subunit protein bL25.